The following is a 436-amino-acid chain: Xylose isomerase (436 aa).

Catalysis depends on residues histidine 100 and aspartate 103. Glutamate 231, glutamate 267, histidine 270, aspartate 295, aspartate 306, aspartate 308, and aspartate 338 together coordinate Mg(2+).

Belongs to the xylose isomerase family. As to quaternary structure, homotetramer. Mg(2+) is required as a cofactor.

The protein localises to the cytoplasm. The enzyme catalyses alpha-D-xylose = alpha-D-xylulofuranose. The sequence is that of Xylose isomerase from Agrobacterium fabrum (strain C58 / ATCC 33970) (Agrobacterium tumefaciens (strain C58)).